Here is a 242-residue protein sequence, read N- to C-terminus: Small ribosomal subunit protein eS4 (242 aa).

An S4 RNA-binding domain is found at 43–106; the sequence is LPLMIIVRDI…GDVYRVLPDE (64 aa).

This sequence belongs to the eukaryotic ribosomal protein eS4 family.

This is Small ribosomal subunit protein eS4 (rps4e) from Methanothermobacter thermautotrophicus (strain ATCC 29096 / DSM 1053 / JCM 10044 / NBRC 100330 / Delta H) (Methanobacterium thermoautotrophicum).